The chain runs to 77 residues: Putative defensin-like protein 185 (77 aa).

The first 22 residues, 1–22 (MKNSSILLLLVVFFVISSSGEA), serve as a signal peptide directing secretion. Intrachain disulfides connect cysteine 25/cysteine 77, cysteine 31/cysteine 54, cysteine 40/cysteine 71, and cysteine 44/cysteine 73.

This sequence belongs to the DEFL family.

The protein resides in the secreted. This is Putative defensin-like protein 185 (LCR39) from Arabidopsis thaliana (Mouse-ear cress).